Reading from the N-terminus, the 217-residue chain is Large ribosomal subunit protein uL4 (217 aa).

The tract at residues 42 to 100 (RAAARQGTHSTKTRGDVSGGGRKPYRQKGTGRARQGSTRAPQFTGGGVVHGPKPRDYSQ) is disordered.

The protein belongs to the universal ribosomal protein uL4 family. Part of the 50S ribosomal subunit.

Its function is as follows. One of the primary rRNA binding proteins, this protein initially binds near the 5'-end of the 23S rRNA. It is important during the early stages of 50S assembly. It makes multiple contacts with different domains of the 23S rRNA in the assembled 50S subunit and ribosome. Forms part of the polypeptide exit tunnel. The chain is Large ribosomal subunit protein uL4 from Mycobacterium avium (strain 104).